The primary structure comprises 194 residues: Histone H1.0-A (194 aa).

2 disordered regions span residues 1-29 (MTENSAPAAKPRRSKASKKSTDHPKYSDM) and 96-194 (ADEV…GRKK). Residues 22-95 (DHPKYSDMIL…GASGSFRLAK (74 aa)) enclose the H15 domain. Basic residues-rich tracts occupy residues 102 to 164 (PAKK…KTVR) and 172 to 194 (KAKKAKPSKPKAKASPKKSGRKK).

The protein belongs to the histone H1/H5 family.

Its subcellular location is the nucleus. It is found in the chromosome. In terms of biological role, histones H1 are necessary for the condensation of nucleosome chains into higher-order structures. The histones H1.0 are found in cells that are in terminal stages of differentiation or that have low rates of cell division. This Xenopus laevis (African clawed frog) protein is Histone H1.0-A (h1-0-a).